We begin with the raw amino-acid sequence, 339 residues long: Phenylalanine--tRNA ligase alpha subunit (339 aa).

A Mg(2+)-binding site is contributed by Glu254.

The protein belongs to the class-II aminoacyl-tRNA synthetase family. Phe-tRNA synthetase alpha subunit type 1 subfamily. Tetramer of two alpha and two beta subunits. It depends on Mg(2+) as a cofactor.

The protein localises to the cytoplasm. The enzyme catalyses tRNA(Phe) + L-phenylalanine + ATP = L-phenylalanyl-tRNA(Phe) + AMP + diphosphate + H(+). The polypeptide is Phenylalanine--tRNA ligase alpha subunit (Desulforudis audaxviator (strain MP104C)).